A 261-amino-acid chain; its full sequence is Homeobox protein engrailed-2b (261 aa).

3 stretches are compositionally biased toward basic and acidic residues: residues 1-21, 53-72, and 100-116; these read MEENDHSNRDVERQDSGDESN, GRRKEGSRRDEINIVERENR, and KKTDISTDESLKSRAET. 3 disordered regions span residues 1-24, 53-125, and 152-176; these read MEENDHSNRDVERQDSGDESNRAI, GRRK…SSDS, and DRPSSGPRSRKPKKKTPTKEDKRPR. Residues 172–231 constitute a DNA-binding region (homeobox); it reads DKRPRTAFTAEQLQRLKNEFQNNRYLTEQRRQALAQELGLNESQIKIWFQNKRAKIKKAT.

The protein belongs to the engrailed homeobox family.

It localises to the nucleus. This chain is Homeobox protein engrailed-2b (eng2b), found in Danio rerio (Zebrafish).